The chain runs to 144 residues: Large ribosomal subunit protein uL16 (144 aa).

Over residues 1–17 (MLQPKKTKFRRQQKGRA) the composition is skewed to basic residues. Positions 1 to 22 (MLQPKKTKFRRQQKGRAKGNAQ) are disordered.

The protein belongs to the universal ribosomal protein uL16 family. In terms of assembly, part of the 50S ribosomal subunit.

Its function is as follows. Binds 23S rRNA and is also seen to make contacts with the A and possibly P site tRNAs. This Bacteroides thetaiotaomicron (strain ATCC 29148 / DSM 2079 / JCM 5827 / CCUG 10774 / NCTC 10582 / VPI-5482 / E50) protein is Large ribosomal subunit protein uL16.